The primary structure comprises 226 residues: Nucleoside triphosphate pyrophosphatase (226 aa).

Residue aspartate 79 is the Proton acceptor of the active site. Residues 204–226 (WSRGTSTHPTPGTSATPKPNPGA) are disordered. The segment covering 206 to 220 (RGTSTHPTPGTSATP) has biased composition (polar residues).

It belongs to the Maf family. Requires a divalent metal cation as cofactor.

The protein resides in the cytoplasm. It catalyses the reaction a ribonucleoside 5'-triphosphate + H2O = a ribonucleoside 5'-phosphate + diphosphate + H(+). The enzyme catalyses a 2'-deoxyribonucleoside 5'-triphosphate + H2O = a 2'-deoxyribonucleoside 5'-phosphate + diphosphate + H(+). Its function is as follows. Nucleoside triphosphate pyrophosphatase. May have a dual role in cell division arrest and in preventing the incorporation of modified nucleotides into cellular nucleic acids. The chain is Nucleoside triphosphate pyrophosphatase from Salinispora tropica (strain ATCC BAA-916 / DSM 44818 / JCM 13857 / NBRC 105044 / CNB-440).